The following is a 1179-amino-acid chain: ATP-dependent helicase/deoxyribonuclease subunit B (1179 aa).

This sequence belongs to the helicase family. AddB/RexB type 2 subfamily. As to quaternary structure, heterodimer of AddA and RexB. Requires Mg(2+) as cofactor.

Functionally, the heterodimer acts as both an ATP-dependent DNA helicase and an ATP-dependent, dual-direction single-stranded exonuclease. Recognizes the chi site generating a DNA molecule suitable for the initiation of homologous recombination. This subunit has 5' -&gt; 3' nuclease activity but not helicase activity. The polypeptide is ATP-dependent helicase/deoxyribonuclease subunit B (Lactobacillus delbrueckii subsp. bulgaricus (strain ATCC BAA-365 / Lb-18)).